We begin with the raw amino-acid sequence, 310 residues long: tRNA dimethylallyltransferase (310 aa).

An ATP-binding site is contributed by 5 to 12 (GPTASGKS). 7 to 12 (TASGKS) contributes to the substrate binding site. The segment at 30–33 (DSMQ) is interaction with substrate tRNA.

This sequence belongs to the IPP transferase family. Monomer. Mg(2+) serves as cofactor.

The enzyme catalyses adenosine(37) in tRNA + dimethylallyl diphosphate = N(6)-dimethylallyladenosine(37) in tRNA + diphosphate. Catalyzes the transfer of a dimethylallyl group onto the adenine at position 37 in tRNAs that read codons beginning with uridine, leading to the formation of N6-(dimethylallyl)adenosine (i(6)A). The protein is tRNA dimethylallyltransferase of Rhodopseudomonas palustris (strain HaA2).